Here is a 359-residue protein sequence, read N- to C-terminus: uncharacterized protein (359 aa).

This sequence belongs to the glycosyltransferase group 1 family. Glycosyltransferase 4 subfamily.

This is an uncharacterized protein from Bacillus subtilis (strain 168).